The primary structure comprises 82 residues: Putative membrane protein insertion efficiency factor (82 aa).

A disordered region spans residues 61–82 (HEGGYDPVPKRKNKNSEGKREE).

It belongs to the UPF0161 family.

It is found in the cell inner membrane. Its function is as follows. Could be involved in insertion of integral membrane proteins into the membrane. The protein is Putative membrane protein insertion efficiency factor of Fusobacterium nucleatum subsp. nucleatum (strain ATCC 25586 / DSM 15643 / BCRC 10681 / CIP 101130 / JCM 8532 / KCTC 2640 / LMG 13131 / VPI 4355).